The chain runs to 627 residues: Phosphomethylpyrimidine synthase (627 aa).

Residues 1–24 (MSATQKNNITRLEQLDRQSTQPFP) are compositionally biased toward polar residues. The interval 1-29 (MSATQKNNITRLEQLDRQSTQPFPNSRKV) is disordered. Residues Asn-231, Met-260, Tyr-289, His-325, 345 to 347 (SRG), 386 to 389 (DGLR), and Glu-425 contribute to the substrate site. His-429 contacts Zn(2+). Tyr-452 contacts substrate. His-493 provides a ligand contact to Zn(2+). Residues Cys-573, Cys-576, and Cys-581 each contribute to the [4Fe-4S] cluster site.

This sequence belongs to the ThiC family. In terms of assembly, homodimer. It depends on [4Fe-4S] cluster as a cofactor.

The enzyme catalyses 5-amino-1-(5-phospho-beta-D-ribosyl)imidazole + S-adenosyl-L-methionine = 4-amino-2-methyl-5-(phosphooxymethyl)pyrimidine + CO + 5'-deoxyadenosine + formate + L-methionine + 3 H(+). It functions in the pathway cofactor biosynthesis; thiamine diphosphate biosynthesis. In terms of biological role, catalyzes the synthesis of the hydroxymethylpyrimidine phosphate (HMP-P) moiety of thiamine from aminoimidazole ribotide (AIR) in a radical S-adenosyl-L-methionine (SAM)-dependent reaction. The sequence is that of Phosphomethylpyrimidine synthase from Pseudomonas aeruginosa (strain UCBPP-PA14).